Here is a 238-residue protein sequence, read N- to C-terminus: ATP synthase subunit a (238 aa).

5 helical membrane-spanning segments follow: residues 17–37 (LSDM…AVAA), 75–95 (FLTL…LGLP), 112–132 (DATV…YYGV), 179–199 (ILLG…AVGA), and 202–222 (FPIM…AFIF).

The protein belongs to the ATPase A chain family. As to quaternary structure, F-type ATPases have 2 components, CF(1) - the catalytic core - and CF(0) - the membrane proton channel. CF(1) has five subunits: alpha(3), beta(3), gamma(1), delta(1), epsilon(1). CF(0) has three main subunits: a(1), b(2) and c(9-12). The alpha and beta chains form an alternating ring which encloses part of the gamma chain. CF(1) is attached to CF(0) by a central stalk formed by the gamma and epsilon chains, while a peripheral stalk is formed by the delta and b chains.

It is found in the cell membrane. In terms of biological role, key component of the proton channel; it plays a direct role in the translocation of protons across the membrane. This is ATP synthase subunit a from Bacillus sp. (strain PS3).